Consider the following 1152-residue polypeptide: Autotransporter adhesin BpaC (1152 aa).

The N-terminal stretch at 1 to 71 is a signal peptide; sequence MNRIFKSIWC…PFAEEAMAAN (71 aa). Residues 72–1061 form a surface exposed passenger domain region; the sequence is NAGVCLTYNG…VGQLNSAVSG (990 aa). Disordered stretches follow at residues 420-886 and 900-949; these read GLQG…AGAT and TATG…ESAA. The span at 427–442 shows a compositional bias: polar residues; it reads ANTGTASGDNSTASGD. Positions 443 to 504 are enriched in low complexity; it reads NATASGTNST…ANGTNSTASG (62 aa). Residues 505–519 show a composition bias toward polar residues; the sequence is DNSTASGTNASATGE. Residues 520–588 are compositionally biased toward low complexity; it reads NSTATGTDST…ANGTNSTASG (69 aa). Over residues 589–603 the composition is skewed to polar residues; sequence DNSTASGTNASATGE. Residues 604 to 630 show a composition bias toward low complexity; it reads NSTATGTDSTASGSNSTANGTNSTASG. Over residues 631-645 the composition is skewed to polar residues; that stretch reads DNSTASGTNASATGE. Low complexity predominate over residues 646 to 672; the sequence is NSTATGTDSTASGSNSTANGTNSTASG. Over residues 673–687 the composition is skewed to polar residues; the sequence is DNSTASGTNASATGE. Residues 688-714 show a composition bias toward low complexity; that stretch reads NSTATGTDSTASGSNSTANGTNSTASG. The span at 715–729 shows a compositional bias: polar residues; that stretch reads DNSTASGTNASATGE. The span at 730–756 shows a compositional bias: low complexity; that stretch reads NSTATGTDSTASGSNSTANGANSTASG. The segment covering 757 to 771 has biased composition (polar residues); that stretch reads DNSTASGTNASATGE. Composition is skewed to low complexity over residues 772–840 and 848–886; these read NSTA…TASG and TNAS…AGAT. The outer membrane translocation of the passenger domain stretch occupies residues 1062-1099; sequence IRNQMDGMQGQIDTLARDAYSGIAAATALTMIPDVDPG. The interval 1100–1152 is translocator domain; sequence KTLAVGIGTANFKGYQASALGATARITQNLKVKTGVSYSGSNYVWGAGMSYQW.

This sequence belongs to the autotransporter-2 (AT-2) (TC 1.B.40) family. Homotrimer.

It is found in the cell surface. Its subcellular location is the cell outer membrane. Its function is as follows. Involved in virulence. Mediates adherence to human respiratory epithelial cells. The sequence is that of Autotransporter adhesin BpaC from Burkholderia pseudomallei (strain 1026b).